We begin with the raw amino-acid sequence, 289 residues long: Phosphatidylserine decarboxylase proenzyme (289 aa).

Active-site charge relay system; for autoendoproteolytic cleavage activity residues include aspartate 89, histidine 146, and serine 252. Residue serine 252 is the Schiff-base intermediate with substrate; via pyruvic acid; for decarboxylase activity of the active site. Pyruvic acid (Ser); by autocatalysis is present on serine 252.

The protein belongs to the phosphatidylserine decarboxylase family. PSD-B subfamily. Prokaryotic type I sub-subfamily. As to quaternary structure, heterodimer of a large membrane-associated beta subunit and a small pyruvoyl-containing alpha subunit. Requires pyruvate as cofactor. In terms of processing, is synthesized initially as an inactive proenzyme. Formation of the active enzyme involves a self-maturation process in which the active site pyruvoyl group is generated from an internal serine residue via an autocatalytic post-translational modification. Two non-identical subunits are generated from the proenzyme in this reaction, and the pyruvate is formed at the N-terminus of the alpha chain, which is derived from the carboxyl end of the proenzyme. The autoendoproteolytic cleavage occurs by a canonical serine protease mechanism, in which the side chain hydroxyl group of the serine supplies its oxygen atom to form the C-terminus of the beta chain, while the remainder of the serine residue undergoes an oxidative deamination to produce ammonia and the pyruvoyl prosthetic group on the alpha chain. During this reaction, the Ser that is part of the protease active site of the proenzyme becomes the pyruvoyl prosthetic group, which constitutes an essential element of the active site of the mature decarboxylase.

The protein resides in the cell membrane. The catalysed reaction is a 1,2-diacyl-sn-glycero-3-phospho-L-serine + H(+) = a 1,2-diacyl-sn-glycero-3-phosphoethanolamine + CO2. It participates in phospholipid metabolism; phosphatidylethanolamine biosynthesis; phosphatidylethanolamine from CDP-diacylglycerol: step 2/2. In terms of biological role, catalyzes the formation of phosphatidylethanolamine (PtdEtn) from phosphatidylserine (PtdSer). The sequence is that of Phosphatidylserine decarboxylase proenzyme from Shewanella denitrificans (strain OS217 / ATCC BAA-1090 / DSM 15013).